Consider the following 118-residue polypeptide: Fluoride-specific ion channel FluC 1 (118 aa).

4 helical membrane-spanning segments follow: residues 5–25 (FLLV…ISIF), 39–59 (FFIN…ALGP), 61–81 (WQLF…TFKV), and 98–118 (YVGL…MLGV). Na(+) contacts are provided by Gly71 and Thr74.

It belongs to the fluoride channel Fluc/FEX (TC 1.A.43) family.

It is found in the cell membrane. It carries out the reaction fluoride(in) = fluoride(out). Na(+) is not transported, but it plays an essential structural role and its presence is essential for fluoride channel function. Functionally, fluoride-specific ion channel. Important for reducing fluoride concentration in the cell, thus reducing its toxicity. This chain is Fluoride-specific ion channel FluC 1, found in Listeria innocua serovar 6a (strain ATCC BAA-680 / CLIP 11262).